We begin with the raw amino-acid sequence, 513 residues long: Ribonuclease Y (513 aa).

A helical membrane pass occupies residues 6 to 26 (YIIIAVVIIIICVILGLYVVD). The disordered stretch occupies residues 35–59 (EASKEARRLKEEAERDAEAKKKEAI). The region spanning 203–288 (TVHVVNLPND…EMVEKAKKEV (86 aa)) is the KH domain. The 94-residue stretch at 329–422 (VLKHSIEVSH…VQAADAISAA (94 aa)) folds into the HD domain.

This sequence belongs to the RNase Y family.

It is found in the cell membrane. In terms of biological role, endoribonuclease that initiates mRNA decay. The protein is Ribonuclease Y of Clostridium botulinum (strain Okra / Type B1).